A 478-amino-acid chain; its full sequence is Cysteine protease ATG4B (478 aa).

The segment covering 1 to 15 has biased composition (polar residues); the sequence is MTSLPDRGVSSSSSD. The disordered stretch occupies residues 1-31; sequence MTSLPDRGVSSSSSDPLCEGNIAPCSSSSEQ. C164 acts as the Nucleophile in catalysis. Residues D361 and H363 contribute to the active site.

The protein belongs to the peptidase C54 family. Interacts with ATG8.

It is found in the cytoplasm. It catalyses the reaction [protein]-C-terminal L-amino acid-glycyl-phosphatidylethanolamide + H2O = [protein]-C-terminal L-amino acid-glycine + a 1,2-diacyl-sn-glycero-3-phosphoethanolamine. Cysteine protease that plays a key role in autophagy by mediating both proteolytic activation and delipidation of ATG8 family proteins. The protease activity is required for proteolytic activation of ATG8 family proteins: cleaves the C-terminal amino acid of ATG8 proteins to reveal a C-terminal glycine. Exposure of the glycine at the C-terminus is essential for ATG8 proteins conjugation to phosphatidylethanolamine (PE) and insertion to membranes, which is necessary for autophagy. In addition to the protease activity, also mediates delipidation of PE-conjugated ATG8 proteins. The chain is Cysteine protease ATG4B (ATG4B) from Oryza sativa subsp. japonica (Rice).